A 709-amino-acid chain; its full sequence is Polyribonucleotide nucleotidyltransferase (709 aa).

Mg(2+) contacts are provided by Asp-486 and Asp-492. Residues Pro-553–Ile-612 enclose the KH domain. One can recognise an S1 motif domain in the interval Ala-622–Lys-690.

It belongs to the polyribonucleotide nucleotidyltransferase family. In terms of assembly, component of the RNA degradosome, which is a multiprotein complex involved in RNA processing and mRNA degradation. Mg(2+) serves as cofactor.

It localises to the cytoplasm. The catalysed reaction is RNA(n+1) + phosphate = RNA(n) + a ribonucleoside 5'-diphosphate. Involved in mRNA degradation. Catalyzes the phosphorolysis of single-stranded polyribonucleotides processively in the 3'- to 5'-direction. This Photorhabdus laumondii subsp. laumondii (strain DSM 15139 / CIP 105565 / TT01) (Photorhabdus luminescens subsp. laumondii) protein is Polyribonucleotide nucleotidyltransferase.